We begin with the raw amino-acid sequence, 408 residues long: Phosphopentomutase (408 aa).

6 residues coordinate Mn(2+): Asp10, Asp303, His308, Asp344, His345, and His356.

This sequence belongs to the phosphopentomutase family. Mn(2+) serves as cofactor.

Its subcellular location is the cytoplasm. The enzyme catalyses 2-deoxy-alpha-D-ribose 1-phosphate = 2-deoxy-D-ribose 5-phosphate. It catalyses the reaction alpha-D-ribose 1-phosphate = D-ribose 5-phosphate. The protein operates within carbohydrate degradation; 2-deoxy-D-ribose 1-phosphate degradation; D-glyceraldehyde 3-phosphate and acetaldehyde from 2-deoxy-alpha-D-ribose 1-phosphate: step 1/2. Isomerase that catalyzes the conversion of deoxy-ribose 1-phosphate (dRib-1-P) and ribose 1-phosphate (Rib-1-P) to deoxy-ribose 5-phosphate (dRib-5-P) and ribose 5-phosphate (Rib-5-P), respectively. The protein is Phosphopentomutase of Tolumonas auensis (strain DSM 9187 / NBRC 110442 / TA 4).